The chain runs to 497 residues: 3-octaprenyl-4-hydroxybenzoate carboxy-lyase (497 aa).

Position 175 (asparagine 175) interacts with Mn(2+). Prenylated FMN is bound by residues 178-180 (IYR), 192-194 (RWL), and 197-198 (RG). Glutamate 241 lines the Mn(2+) pocket. Catalysis depends on aspartate 290, which acts as the Proton donor.

Belongs to the UbiD family. Homohexamer. The cofactor is prenylated FMN. Mn(2+) is required as a cofactor.

Its subcellular location is the cell membrane. It catalyses the reaction a 4-hydroxy-3-(all-trans-polyprenyl)benzoate + H(+) = a 2-(all-trans-polyprenyl)phenol + CO2. The protein operates within cofactor biosynthesis; ubiquinone biosynthesis. Functionally, catalyzes the decarboxylation of 3-octaprenyl-4-hydroxy benzoate to 2-octaprenylphenol, an intermediate step in ubiquinone biosynthesis. In Escherichia coli O157:H7, this protein is 3-octaprenyl-4-hydroxybenzoate carboxy-lyase.